A 547-amino-acid chain; its full sequence is Glucocorticoid-induced transcript 1 protein (547 aa).

Residues 1–13 (MSTASSSSSSSSS) show a composition bias toward low complexity. Disordered regions lie at residues 1–55 (MSTA…APAA) and 72–285 (LLRG…LSNI). Serine 20 is subject to Phosphoserine. A compositionally biased stretch (low complexity) spans 26 to 38 (SAAGSPPAVAAAG). Residues 39-50 (SGNGAGGGGGVG) are compositionally biased toward gly residues. Serine 79, serine 105, serine 107, and serine 108 each carry phosphoserine. Residues 86-105 (AAAAASLGSLPGPGAARGPS) are compositionally biased toward low complexity. Residue threonine 110 is modified to Phosphothreonine. Residues 130-145 (RSPESHRRSSSPERRS) are compositionally biased toward basic and acidic residues. Low complexity predominate over residues 162–177 (RTSSTIRRTSSLDTIT). Residues serine 171 and serine 172 each carry the phosphoserine modification. Threonine 175 and threonine 177 each carry phosphothreonine. Residues 187–201 (RDPHVHYPSCMKDKA) are compositionally biased toward basic and acidic residues. A Phosphoserine modification is found at serine 223. Residues 225 to 254 (GSADQLKEQIAKLRQQLQRSKQSSRHSKEK) adopt a coiled-coil conformation. Over residues 236-245 (KLRQQLQRSK) the composition is skewed to low complexity. Serine 258 carries the phosphoserine modification. Positions 265–276 (ITISHTQATGSR) are enriched in polar residues. Position 266 is a phosphothreonine (threonine 266). Serine 303 is modified (phosphoserine). Residues 319–331 (EVSKPLDIPDGRR) show a composition bias toward basic and acidic residues. Residues 319-417 (EVSKPLDIPD…KPNNSYMFKR (99 aa)) are disordered. Residues 339–356 (RSSSTRSIDTQTPSVQER) are compositionally biased toward polar residues. A Phosphothreonine modification is found at threonine 343. At serine 345 the chain carries Phosphoserine. Position 350 is a phosphothreonine (threonine 350). Low complexity predominate over residues 357–369 (SSSCSSHSPCVSP). 5 positions are modified to phosphoserine: serine 394, serine 398, serine 406, serine 412, and serine 480. Residues 505 to 520 (SLSDDTSTAGSMEASV) show a composition bias toward polar residues. A disordered region spans residues 505 to 530 (SLSDDTSTAGSMEASVQQPSQQQQLL). The segment covering 521–530 (QQPSQQQQLL) has biased composition (low complexity).

In terms of tissue distribution, predominantly expressed in lung, spleen, thymus and testis and, at lower levels, in brain, bone marrow, peripheral leukocytes, skin and trachea.

This Homo sapiens (Human) protein is Glucocorticoid-induced transcript 1 protein (GLCCI1).